Consider the following 728-residue polypeptide: Lanosterol synthase (728 aa).

A PFTB 1 repeat occupies 117-159 (RVEMIRYIVNTAHPVDGGWGLHSVDKSTCFGTTMNYVCLRLLG). The active-site Proton donor is the Asp-450. 2 PFTB repeats span residues 561–602 (ISSA…HTVG) and 611–657 (VKKG…ALIG).

It belongs to the terpene cyclase/mutase family.

Its subcellular location is the lipid droplet. It is found in the endoplasmic reticulum membrane. The catalysed reaction is (S)-2,3-epoxysqualene = lanosterol. It participates in terpene metabolism; lanosterol biosynthesis; lanosterol from farnesyl diphosphate: step 3/3. In terms of biological role, lanosterol synthase; part of the third module of ergosterol biosynthesis pathway that includes the late steps of the pathway. ERG7 catalyzes the cyclization of (S)-2,3 oxidosqualene to lanosterol, a reaction that forms the sterol core. The third module or late pathway involves the ergosterol synthesis itself through consecutive reactions that mainly occur in the endoplasmic reticulum (ER) membrane. Firstly, the squalene synthase ERG9 catalyzes the condensation of 2 farnesyl pyrophosphate moieties to form squalene, which is the precursor of all steroids. Squalene synthase is crucial for balancing the incorporation of farnesyl diphosphate (FPP) into sterol and nonsterol isoprene synthesis. Secondly, the squalene epoxidase ERG1 catalyzes the stereospecific oxidation of squalene to (S)-2,3-epoxysqualene, which is considered to be a rate-limiting enzyme in steroid biosynthesis. Then, the lanosterol synthase ERG7 catalyzes the cyclization of (S)-2,3 oxidosqualene to lanosterol, a reaction that forms the sterol core. In the next steps, lanosterol is transformed to zymosterol through a complex process involving various demethylation, reduction and desaturation reactions. The lanosterol 14-alpha-demethylase ERG11 (also known as CYP51) catalyzes C14-demethylation of lanosterol to produce 4,4'-dimethyl cholesta-8,14,24-triene-3-beta-ol, which is critical for ergosterol biosynthesis. The C-14 reductase ERG24 reduces the C14=C15 double bond of 4,4-dimethyl-cholesta-8,14,24-trienol to produce 4,4-dimethyl-cholesta-8,24-dienol. 4,4-dimethyl-cholesta-8,24-dienol is substrate of the C-4 demethylation complex ERG25-ERG26-ERG27 in which ERG25 catalyzes the three-step monooxygenation required for the demethylation of 4,4-dimethyl and 4alpha-methylsterols, ERG26 catalyzes the oxidative decarboxylation that results in a reduction of the 3-beta-hydroxy group at the C-3 carbon to an oxo group, and ERG27 is responsible for the reduction of the keto group on the C-3. ERG28 has a role as a scaffold to help anchor ERG25, ERG26 and ERG27 to the endoplasmic reticulum and ERG29 regulates the activity of the iron-containing C4-methylsterol oxidase ERG25. Then, the sterol 24-C-methyltransferase ERG6 catalyzes the methyl transfer from S-adenosyl-methionine to the C-24 of zymosterol to form fecosterol. The C-8 sterol isomerase ERG2 catalyzes the reaction which results in unsaturation at C-7 in the B ring of sterols and thus converts fecosterol to episterol. The sterol-C5-desaturase ERG3 then catalyzes the introduction of a C-5 double bond in the B ring to produce 5-dehydroepisterol. The C-22 sterol desaturase ERG5 further converts 5-dehydroepisterol into ergosta-5,7,22,24(28)-tetraen-3beta-ol by forming the C-22(23) double bond in the sterol side chain. Finally, ergosta-5,7,22,24(28)-tetraen-3beta-ol is substrate of the C-24(28) sterol reductase ERG4 to produce ergosterol. In Candida albicans (strain SC5314 / ATCC MYA-2876) (Yeast), this protein is Lanosterol synthase.